The sequence spans 309 residues: 5-formyl-3-hydroxy-2-methylpyridine 4-carboxylate 5-dehydrogenase (309 aa).

Residues 12-13 (TM), Asp32, 87-89 (VPE), and Lys94 contribute to the NAD(+) site.

Belongs to the 3-hydroxyacyl-CoA dehydrogenase family. As to quaternary structure, homodimer.

The catalysed reaction is 5-formyl-3-hydroxy-2-methylpyridine-4-carboxylate + NAD(+) + H2O = 5-hydroxy-6-methylpyridine-3,4-dicarboxylate + NADH + 2 H(+). The enzyme catalyses 5-formyl-3-hydroxy-2-methylpyridine-4-carboxylate + NADH + H(+) = 4-pyridoxate + NAD(+). It participates in cofactor degradation; B6 vitamer degradation. Involved in the degradation of pyridoxine (vitamin B(6)). Catalyzes the oxidation of 5-formyl-3-hydroxy-2-methylpyridine-4-carboxylate (FHMPC) by NAD(+) to 5-hydroxy-6-methylpyridine-3,4-dicarboxylate (HMPDC). Can also catalyze the reduction of FHMPC by NADH to 4-pyridoxic acid. This is 5-formyl-3-hydroxy-2-methylpyridine 4-carboxylate 5-dehydrogenase from Mesorhizobium japonicum (strain LMG 29417 / CECT 9101 / MAFF 303099) (Mesorhizobium loti (strain MAFF 303099)).